Here is a 366-residue protein sequence, read N- to C-terminus: tRNA/tmRNA (uracil-C(5))-methyltransferase (366 aa).

Residues glutamine 190, tyrosine 218, asparagine 223, glutamate 239, and aspartate 299 each coordinate S-adenosyl-L-methionine. Cysteine 324 functions as the Nucleophile in the catalytic mechanism. The active-site Proton acceptor is the glutamate 358.

This sequence belongs to the class I-like SAM-binding methyltransferase superfamily. RNA M5U methyltransferase family. TrmA subfamily.

It carries out the reaction uridine(54) in tRNA + S-adenosyl-L-methionine = 5-methyluridine(54) in tRNA + S-adenosyl-L-homocysteine + H(+). The enzyme catalyses uridine(341) in tmRNA + S-adenosyl-L-methionine = 5-methyluridine(341) in tmRNA + S-adenosyl-L-homocysteine + H(+). Dual-specificity methyltransferase that catalyzes the formation of 5-methyluridine at position 54 (m5U54) in all tRNAs, and that of position 341 (m5U341) in tmRNA (transfer-mRNA). The sequence is that of tRNA/tmRNA (uracil-C(5))-methyltransferase from Salmonella arizonae (strain ATCC BAA-731 / CDC346-86 / RSK2980).